The sequence spans 643 residues: Sodium-dependent nutrient amino acid transporter 1 (643 aa).

Residues 1 to 38 are disordered; sequence MELKGVQPSNGSPNGNGNGATNAASTEKTDAEKPTAER. Residues 1–40 lie on the Cytoplasmic side of the membrane; the sequence is MELKGVQPSNGSPNGNGNGATNAASTEKTDAEKPTAERTN. A compositionally biased stretch (low complexity) spans 8-26; that stretch reads PSNGSPNGNGNGATNAAST. Residues 27-36 show a composition bias toward basic and acidic residues; that stretch reads EKTDAEKPTA. Transmembrane regions (helical) follow at residues 41–61, 74–94, and 111–131; these read WGNG…LGNV, GAFL…MYYL, and SVVP…ICII. Residues Asn185, Asn190, and Asn200 are each glycosylated (N-linked (GlcNAc...) asparagine). A run of 9 helical transmembrane segments spans residues 231–251, 260–280, 309–329, 343–363, 403–423, 449–469, 476–496, 518–538, and 554–574; these read PDWK…LVIM, AAYF…IRAV, AVVQ…MFAS, IVTT…FAIL, LFSV…IVAL, VCGF…ILTL, TYVV…VYGL, CWSF…MATI, and VAGW…GLWY.

It belongs to the sodium:neurotransmitter symporter (SNF) (TC 2.A.22) family.

It is found in the membrane. Unusual broad substrate spectrum amino acid:sodium cotransporter that promotes absorption of the D isomers of essential amino acids. Neutral amino acids are the preferred substrates, especially methionine and phenylalanine. This Drosophila simulans (Fruit fly) protein is Sodium-dependent nutrient amino acid transporter 1.